The chain runs to 140 residues: Nucleoside diphosphate kinase (140 aa).

6 residues coordinate ATP: lysine 11, phenylalanine 59, arginine 87, threonine 93, arginine 104, and asparagine 114. The active-site Pros-phosphohistidine intermediate is the histidine 117.

Belongs to the NDK family. Homotetramer. The cofactor is Mg(2+).

It is found in the cytoplasm. It carries out the reaction a 2'-deoxyribonucleoside 5'-diphosphate + ATP = a 2'-deoxyribonucleoside 5'-triphosphate + ADP. It catalyses the reaction a ribonucleoside 5'-diphosphate + ATP = a ribonucleoside 5'-triphosphate + ADP. Its function is as follows. Major role in the synthesis of nucleoside triphosphates other than ATP. The ATP gamma phosphate is transferred to the NDP beta phosphate via a ping-pong mechanism, using a phosphorylated active-site intermediate. The sequence is that of Nucleoside diphosphate kinase from Francisella tularensis subsp. tularensis (strain SCHU S4 / Schu 4).